Consider the following 165-residue polypeptide: Probable velvet family sexual development regulator CC1G_12219 (165 aa).

Residues 1–121 enclose the Velvet domain; it reads MSNTDAQTSF…SVWGAQVNVR (121 aa).

It belongs to the velvet family.

Its subcellular location is the nucleus. Functionally, velvet-domain-containing protein that probably acts as a positive regulator of sexual development. This is Probable velvet family sexual development regulator CC1G_12219 from Coprinopsis cinerea (strain Okayama-7 / 130 / ATCC MYA-4618 / FGSC 9003) (Inky cap fungus).